Reading from the N-terminus, the 522-residue chain is Maturase K (522 aa).

The protein belongs to the intron maturase 2 family. MatK subfamily.

It is found in the plastid. It localises to the chloroplast. Its function is as follows. Usually encoded in the trnK tRNA gene intron. Probably assists in splicing its own and other chloroplast group II introns. The sequence is that of Maturase K from Gladiolus papilio (Goldblotch gladiolus).